The primary structure comprises 150 residues: D-aminoacyl-tRNA deacylase (150 aa).

The short motif at 137 to 138 is the Gly-cisPro motif, important for rejection of L-amino acids element; the sequence is GP.

It belongs to the DTD family. Homodimer.

The protein resides in the cytoplasm. It carries out the reaction glycyl-tRNA(Ala) + H2O = tRNA(Ala) + glycine + H(+). It catalyses the reaction a D-aminoacyl-tRNA + H2O = a tRNA + a D-alpha-amino acid + H(+). Functionally, an aminoacyl-tRNA editing enzyme that deacylates mischarged D-aminoacyl-tRNAs. Also deacylates mischarged glycyl-tRNA(Ala), protecting cells against glycine mischarging by AlaRS. Acts via tRNA-based rather than protein-based catalysis; rejects L-amino acids rather than detecting D-amino acids in the active site. By recycling D-aminoacyl-tRNA to D-amino acids and free tRNA molecules, this enzyme counteracts the toxicity associated with the formation of D-aminoacyl-tRNA entities in vivo and helps enforce protein L-homochirality. In Heliobacterium modesticaldum (strain ATCC 51547 / Ice1), this protein is D-aminoacyl-tRNA deacylase.